Reading from the N-terminus, the 273-residue chain is Light-independent protochlorophyllide reductase iron-sulfur ATP-binding protein (273 aa).

Residues glycine 12 to threonine 17 and lysine 41 contribute to the ATP site. Position 16 (serine 16) interacts with Mg(2+). 2 residues coordinate [4Fe-4S] cluster: cysteine 97 and cysteine 131. Asparagine 182–arginine 183 contributes to the ATP binding site.

This sequence belongs to the NifH/BchL/ChlL family. Homodimer. Protochlorophyllide reductase is composed of three subunits; BchL, BchN and BchB. [4Fe-4S] cluster is required as a cofactor.

It catalyses the reaction chlorophyllide a + oxidized 2[4Fe-4S]-[ferredoxin] + 2 ADP + 2 phosphate = protochlorophyllide a + reduced 2[4Fe-4S]-[ferredoxin] + 2 ATP + 2 H2O. Its pathway is porphyrin-containing compound metabolism; bacteriochlorophyll biosynthesis (light-independent). Functionally, component of the dark-operative protochlorophyllide reductase (DPOR) that uses Mg-ATP and reduced ferredoxin to reduce ring D of protochlorophyllide (Pchlide) to form chlorophyllide a (Chlide). This reaction is light-independent. The L component serves as a unique electron donor to the NB-component of the complex, and binds Mg-ATP. This Chloroflexus aggregans (strain MD-66 / DSM 9485) protein is Light-independent protochlorophyllide reductase iron-sulfur ATP-binding protein.